The sequence spans 183 residues: Ribosome rescue factor SmrB (183 aa).

A Smr domain is found at 98–173; that stretch reads LDLHGLTQLQ…GDAALLVLIE (76 aa).

It belongs to the SmrB family. As to quaternary structure, associates with collided ribosomes, but not with correctly translating polysomes.

Acts as a ribosome collision sensor. Detects stalled/collided disomes (pairs of ribosomes where the leading ribosome is stalled and a second ribosome has collided with it) and endonucleolytically cleaves mRNA at the 5' boundary of the stalled ribosome. Stalled/collided disomes form a new interface (primarily via the 30S subunits) that binds SmrB. Cleaved mRNA becomes available for tmRNA ligation, leading to ribosomal subunit dissociation and rescue of stalled ribosomes. This is Ribosome rescue factor SmrB from Shigella sonnei (strain Ss046).